The primary structure comprises 541 residues: Myrosinase 1 (541 aa).

Residues 1–19 (MKLLMLAFVFLLALATCKG) form the signal peptide. Cystine bridges form between Cys-24–Cys-449, Cys-32–Cys-445, and Cys-224–Cys-232. N-linked (GlcNAc...) asparagine glycosylation occurs at Asn-33. An a beta-D-glucoside-binding site is contributed by Gln-57. The N-linked (GlcNAc...) asparagine glycan is linked to Asn-108. His-159 contributes to the a beta-D-glucoside binding site. The N-linked (GlcNAc...) asparagine glycan is linked to Asn-175. 204–205 (NQ) contacts a beta-D-glucoside. N-linked (GlcNAc...) asparagine glycosylation occurs at Asn-236. Tyr-348 is an a beta-D-glucoside binding site. 2 N-linked (GlcNAc...) asparagine glycosylation sites follow: Asn-356 and Asn-379. A beta-D-glucoside-binding positions include Glu-420, Trp-468, 475-476 (EF), and Phe-484. The active-site Nucleophile is the Glu-420. Residues Asn-493 and Asn-512 are each glycosylated (N-linked (GlcNAc...) asparagine).

The protein belongs to the glycosyl hydrolase 1 family. Homodimer. In terms of tissue distribution, expressed in guard cells, phloem-associated cells and myrosin cells.

The protein resides in the vacuole. The catalysed reaction is a thioglucoside + H2O = a sugar + a thiol.. The enzyme catalyses Hydrolysis of terminal, non-reducing beta-D-glucosyl residues with release of beta-D-glucose.. Degradation of glucosinolates (glucose residue linked by a thioglucoside bound to an amino acid derivative) to glucose, sulfate and any of the products: thiocyanates, isothiocyanates, nitriles, epithionitriles or oxazolidine-2-thiones. These toxic degradation products can deter insect herbivores. Seems to function in abscisic acid (ABA) and methyl jasmonate (MeJA) signaling in guard cells. Functionally redundant with TGG2. Hydrolyzes sinigrin and, with lower efficiency, p-nitrophenyl beta-D-glucoside. The sequence is that of Myrosinase 1 from Arabidopsis thaliana (Mouse-ear cress).